The following is a 448-amino-acid chain: Tryptophan--tRNA ligase (448 aa).

ATP is bound by residues 10–12 and 18–19; these read TPT and GN. Residues 11–19 carry the 'HIGH' region motif; sequence PTGTPHLGN. Position 143 (Asp143) interacts with L-tryptophan. ATP is bound by residues 155-157, Leu197, and 204-208; these read GRD and KMSKS. A 'KMSKS' region motif is present at residues 204–208; the sequence is KMSKS.

This sequence belongs to the class-I aminoacyl-tRNA synthetase family. As to quaternary structure, homodimer.

Its subcellular location is the cytoplasm. It carries out the reaction tRNA(Trp) + L-tryptophan + ATP = L-tryptophyl-tRNA(Trp) + AMP + diphosphate + H(+). Functionally, catalyzes the attachment of tryptophan to tRNA(Trp). This is Tryptophan--tRNA ligase from Pseudomonas aeruginosa (strain ATCC 15692 / DSM 22644 / CIP 104116 / JCM 14847 / LMG 12228 / 1C / PRS 101 / PAO1).